The primary structure comprises 494 residues: Myocyte-specific enhancer factor 2A (494 aa).

Residues 3–57 (RKKIQITRIMDERNRQVTFTKRKFGLMKKAYELSVLCDCEIALIIFNSSNKLFQY) form the MADS-box domain. A DNA-binding region (mef2-type) is located at residues 58–86 (ASTDMDKVLLKYTEYNEPHESRTNSDIVE). S59 is subject to Phosphoserine; by CK2. Phosphoserine is present on residues S98 and S108. Residues 171-181 (TLTDSSMLSPP) show a composition bias toward low complexity. A disordered region spans residues 171 to 218 (TLTDSSMLSPPQTTLHRNVSPGAPQRPPSTGNAGGMLSTTDLIVPNGA). Position 233 is a phosphoserine (S233). The disordered stretch occupies residues 238–268 (GATGANSLGKVMPTKSPPPPGGGNLGMNSRK). K247 carries the post-translational modification N6-acetyllysine. Phosphoserine is present on S253. Residues 264 to 281 (MNSRKPDLRVVIPPSSKG) form a required for interaction with MAPKs region. A phosphothreonine; by MAPK7 and MAPK14 mark is found at T302 and T309. S345 bears the Phosphoserine; by MAPK7 mark. Positions 380-392 (SNLSINTNQNINI) are enriched in polar residues. Positions 380–494 (SNLSINTNQN…KRMRMDAWVT (115 aa)) are disordered. At K393 the chain carries N6-acetyllysine; alternate. K393 participates in a covalent cross-link: Glycyl lysine isopeptide (Lys-Gly) (interchain with G-Cter in SUMO); alternate. The residue at position 398 (S398) is a Phosphoserine; by CDK5. T405 bears the Phosphothreonine mark. Positions 418–432 (QPPPPPPQPQPPQPQ) are enriched in pro residues. A Phosphoserine modification is found at S440. The span at 440 to 453 (SPVDSLSSSSSSYD) shows a compositional bias: low complexity. 2 stretches are compositionally biased toward basic and acidic residues: residues 454–464 (GSDREDPRGDF) and 475–494 (NTEDRESPSVKRMRMDAWVT).

Binds DNA as a homo- or heterodimer. Dimerizes with MEF2D. Interacts with HDAC7. Interacts with PIAS1; the interaction enhances sumoylation. Interacts with HDAC4, HDAC9 and SLC2A4RG. Interacts (via the N-terminal) with MAPK7; the interaction results in the phosphorylation and transcriptional activity of MEF2A. Post-translationally, constitutive phosphorylation on Ser-398 promotes Lys-393 sumoylation thus preventing acetylation at this site. Dephosphorylation on Ser-398 by PPP3CA upon neuron depolarization promotes a switch from sumoylation to acetylation on residue Lys-393 leading to inhibition of dendrite claw differentiation. Phosphorylation on Thr-302 and Thr-309 are the main sites involved in p38 MAPK signaling and activate transcription. Phosphorylated on these sites by MAPK14/p38alpha and MAPK11/p38beta, but not by MAPK13/p38delta nor by MAPK12/p38gamma. Phosphorylation on Ser-398 by CDK5 induced by neurotoxicity inhibits MEF2A transcriptional activation leading to apoptosis of cortical neurons. Phosphorylation on Thr-302, Thr-309 and Ser-345 can be induced by EGF. Sumoylation on Lys-393 is enhanced by PIAS1 and represses transcriptional activity. Phosphorylation on Ser-398 is required for sumoylation. Has no effect on nuclear location nor on DNA binding. Sumoylated with SUMO1 and, to a lesser extent with SUMO2 and SUMO3. PIASx facilitates sumoylation in postsynaptic dendrites in the cerebellar cortex and promotes their morphogenesis. In terms of processing, acetylation on Lys-393 activates transcriptional activity. Acetylated by p300 on several sites in diffentiating myocytes. Acetylation on Lys-4 increases DNA binding and transactivation. Hyperacetylation by p300 leads to enhanced cardiac myocyte growth and heart failure. Post-translationally, proteolytically cleaved in cerebellar granule neurons on several sites by caspase 3 and caspase 7 following neurotoxicity. Preferentially cleaves the CDK5-mediated hyperphosphorylated form which leads to neuron apoptosis and transcriptional inactivation.

Its subcellular location is the nucleus. Transcriptional activator which binds specifically to the MEF2 element, 5'-YTA[AT](4)TAR-3', found in numerous muscle-specific genes. Also involved in the activation of numerous growth factor- and stress-induced genes. Mediates cellular functions not only in skeletal and cardiac muscle development, but also in neuronal differentiation and survival. Plays diverse roles in the control of cell growth, survival and apoptosis via p38 MAPK signaling in muscle-specific and/or growth factor-related transcription. In cerebellar granule neurons, phosphorylated and sumoylated MEF2A represses transcription of NUR77 promoting synaptic differentiation. Associates with chromatin to the ZNF16 promoter. The sequence is that of Myocyte-specific enhancer factor 2A (MEF2A) from Pongo abelii (Sumatran orangutan).